Reading from the N-terminus, the 503-residue chain is SH2 domain-containing adapter protein B (503 aa).

Disordered regions lie at residues 1–49 (MAKW…QACS) and 61–81 (CFSASSGSLPDDSGSTSDLIR). A Phosphoserine modification is found at Ser-101. Positions 147-157 (AAASSSSSSGS) are enriched in low complexity. The segment at 147-180 (AAASSSSSSGSPHLYRSSSERRPTTPAEVRYISP) is disordered. A Glycyl lysine isopeptide (Lys-Gly) (interchain with G-Cter in SUMO2) cross-link involves residue Lys-186. Disordered stretches follow at residues 225–262 (ETGAGQKDKVTIADDYSDPFDAKSDLKSKAGKGESAGY), 292–333 (DTPY…YDQP), and 345–381 (AAQFNGNEKRQSSPSPSRDRRRQLRAPGGGFKPIKHG). Residues 244–256 (FDAKSDLKSKAGK) are compositionally biased toward basic and acidic residues. Phosphoserine is present on residues Ser-301 and Ser-311. The span at 301–311 (SVDSDSESTVS) shows a compositional bias: polar residues. Residues 313-328 (RLRESKLPQDDDRPAD) are compositionally biased toward basic and acidic residues. Position 382 is a phosphoserine (Ser-382). The SH2 domain maps to 404–498 (WYHGAISRSD…AEHLSLLYPV (95 aa)).

In terms of assembly, interacts with phosphorylated 'Tyr-720' of the ligand-activated receptor PDGFRA via its SH2 domain. Interacts with the ligand-activated receptors PDGFRB, FGFR1, KDR/VEGFR2, IL2RB and IL2RG. Interacts with EPS8 and V-SRC. Interacts with GRB2 and GRAP. Interacts with CD3Z. Interacts with tyrosine-phosphorylated LAT upon T-cell antigen receptor activation. Interacts with PLCG1. Interacts with ZAP70, LCP2/SLP-76, VAV1 and GRAP2. Interacts with JAK1 and JAK3. Interacts with PTK2/FAK1. Interacts with CRK/CrKII. Interacts with IRS2. Interacts with PTPN11. Post-translationally, phosphorylated upon PDGFRA, PDGFRB, TCR, IL2 receptor, FGFR1 or VEGFR2 activation. As to expression, expressed in heart, liver, brain and kidney (at protein level).

The protein localises to the cytoplasm. It localises to the cell membrane. Adapter protein which regulates several signal transduction cascades by linking activated receptors to downstream signaling components. May play a role in angiogenesis by regulating FGFR1, VEGFR2 and PDGFR signaling. May also play a role in T-cell antigen receptor/TCR signaling, interleukin-2 signaling, apoptosis and neuronal cells differentiation by mediating basic-FGF and NGF-induced signaling cascades. May also regulate IRS1 and IRS2 signaling in insulin-producing cells. This is SH2 domain-containing adapter protein B (Shb) from Mus musculus (Mouse).